Here is a 120-residue protein sequence, read N- to C-terminus: NAD(P)H-quinone oxidoreductase subunit 3, chloroplastic (120 aa).

Helical transmembrane passes span 9 to 29 (IFWAFLIISSVIPILAFXISG), 64 to 84 (MFALVFVVFDVETVFLYPWAM), and 88 to 108 (VLGVSVFIEALIFVLILIVGL).

It belongs to the complex I subunit 3 family. As to quaternary structure, NDH is composed of at least 16 different subunits, 5 of which are encoded in the nucleus.

The protein resides in the plastid. It is found in the chloroplast thylakoid membrane. It catalyses the reaction a plastoquinone + NADH + (n+1) H(+)(in) = a plastoquinol + NAD(+) + n H(+)(out). The enzyme catalyses a plastoquinone + NADPH + (n+1) H(+)(in) = a plastoquinol + NADP(+) + n H(+)(out). Its function is as follows. NDH shuttles electrons from NAD(P)H:plastoquinone, via FMN and iron-sulfur (Fe-S) centers, to quinones in the photosynthetic chain and possibly in a chloroplast respiratory chain. The immediate electron acceptor for the enzyme in this species is believed to be plastoquinone. Couples the redox reaction to proton translocation, and thus conserves the redox energy in a proton gradient. This chain is NAD(P)H-quinone oxidoreductase subunit 3, chloroplastic, found in Eucalyptus globulus subsp. globulus (Tasmanian blue gum).